Reading from the N-terminus, the 150-residue chain is C-type lectin mosGCTL-7 (150 aa).

A signal peptide spans 1–17 (MQLVHVLVVLLSVVAHA). The 123-residue stretch at 18–140 (KKFFIPNLKA…CRGFKAYIVC (123 aa)) folds into the C-type lectin domain. N-linked (GlcNAc...) asparagine glycosylation occurs at Asn-67. A disulfide bridge links Cys-111 with Cys-131.

Interacts with putative receptor-type tyrosine-protein phosphatase mosPTP-1; the interaction probably mediates the recruitment of Japanese encephalitis virus particles in complex with C-type lectin mosGCTL-7 to the cell surface. In terms of assembly, (Microbial infection) Interacts with envelope protein E (glycosylated) of Japanese encephalitis virus in a calcium-dependent manner.

It is found in the secreted. Functionally, carbohydrate-binding protein. In terms of biological role, (Microbial infection) Facilitates Japanese encephalitis virus infection in mosquitoes probably via capturing viral particles and presenting them to a ligand on the cell surface, thereby facilitating viral entry. This Aedes aegypti (Yellowfever mosquito) protein is C-type lectin mosGCTL-7.